Reading from the N-terminus, the 414-residue chain is MVYDIMDYDIELWDIVKKEINRQERHIDLVASENYISIQAMKAQGSQLTNKYAEGYPGKRYYGGCKYVDLIEQLAIDRAKVLFTAEYVNVQPHSGSQANFSVFNALLDPGDTILGMHLYHGGHLTHGSKVNFSGKLYKTIFYGVDKFGCIDYEQLCFLTERYRPKMIIGGFSAYSGIVDWARMRRIADSVGAYFFVDMAHIAGLVAAGVYPNPIPYAHVVTATTHKTLAGPRGGIILSNGDNDIEFYRKLDASVFPGSQGGPLMHVIAAKAVAFKEAMHVDFKRYQKQVIINSQKMAKEFLNNGFTVVSGIPYNHLFILDLTNHYITGKDASLVLERANIIVNKNCIPNDSHSPFITSGIRIGTAAVTRRGFNDNDVQEVARWICNILNDISNEKIILNAKKNVLDICYRHPVY.

(6S)-5,6,7,8-tetrahydrofolate-binding positions include leucine 118 and 122–124 (GHL). Lysine 226 bears the N6-(pyridoxal phosphate)lysine mark. Position 353 to 355 (353 to 355 (SPF)) interacts with (6S)-5,6,7,8-tetrahydrofolate.

The protein belongs to the SHMT family. In terms of assembly, homodimer. The cofactor is pyridoxal 5'-phosphate.

The protein resides in the cytoplasm. It carries out the reaction (6R)-5,10-methylene-5,6,7,8-tetrahydrofolate + glycine + H2O = (6S)-5,6,7,8-tetrahydrofolate + L-serine. It functions in the pathway one-carbon metabolism; tetrahydrofolate interconversion. It participates in amino-acid biosynthesis; glycine biosynthesis; glycine from L-serine: step 1/1. Catalyzes the reversible interconversion of serine and glycine with tetrahydrofolate (THF) serving as the one-carbon carrier. This reaction serves as the major source of one-carbon groups required for the biosynthesis of purines, thymidylate, methionine, and other important biomolecules. Also exhibits THF-independent aldolase activity toward beta-hydroxyamino acids, producing glycine and aldehydes, via a retro-aldol mechanism. The chain is Serine hydroxymethyltransferase from Blochmanniella floridana.